The chain runs to 92 residues: YcgL domain-containing protein Sbal_1869 (92 aa).

Residues 1 to 85 (MLCAVYKSSR…PQVNLLAEHK (85 aa)) enclose the YcgL domain.

This chain is YcgL domain-containing protein Sbal_1869, found in Shewanella baltica (strain OS155 / ATCC BAA-1091).